The following is a 488-amino-acid chain: ATP-dependent RNA helicase dbp3 (488 aa).

Basic and acidic residues predominate over residues 1 to 29 (MAKREHQDQTGDSRPSKKSKGTKDTKKNT). The segment at 1 to 42 (MAKREHQDQTGDSRPSKKSKGTKDTKKNTEVSPPYFQSPALD) is disordered. A Q motif motif is present at residues 92 to 100 (GFASPTAIQ). One can recognise a Helicase ATP-binding domain in the interval 104–279 (WPLLFAGRDV…STFMTSPVTV (176 aa)). 117-124 (AETGSGKT) is an ATP binding site. Positions 226–229 (DEAD) match the DEAD box motif. In terms of domain architecture, Helicase C-terminal spans 306 to 457 (EKEQRLVQIL…EVPEALLKFG (152 aa)).

This sequence belongs to the DEAD box helicase family. DDX5/DBP2 subfamily.

The protein resides in the nucleus. It is found in the nucleolus. The enzyme catalyses ATP + H2O = ADP + phosphate + H(+). Its function is as follows. ATP-dependent RNA helicase required for 60S ribosomal subunit synthesis. Involved in efficient pre-rRNA processing, predominantly at site A3, which is necessary for the normal formation of 25S and 5.8S rRNAs. This Emericella nidulans (strain FGSC A4 / ATCC 38163 / CBS 112.46 / NRRL 194 / M139) (Aspergillus nidulans) protein is ATP-dependent RNA helicase dbp3 (dbp3).